The chain runs to 533 residues: Na(+)/H(+) antiporter NhaB (533 aa).

11 consecutive transmembrane segments (helical) span residues 10–30, 67–87, 98–118, 131–165, 209–229, 247–267, 310–330, 355–375, 396–416, 454–474, and 481–501; these read IGNF…SFLI, PGGL…SQVL, LLLV…LFVF, VSLL…FYSI, LLMH…VGEP, IRMS…CFIV, AFVG…VGLI, EEAL…AVII, LVIF…VFVG, ATPN…APLI, and MVWM…MAIQ.

Belongs to the NhaB Na(+)/H(+) (TC 2.A.34) antiporter family.

The protein localises to the cell inner membrane. The catalysed reaction is 2 Na(+)(in) + 3 H(+)(out) = 2 Na(+)(out) + 3 H(+)(in). In terms of biological role, na(+)/H(+) antiporter that extrudes sodium in exchange for external protons. The chain is Na(+)/H(+) antiporter NhaB from Shewanella sp. (strain ANA-3).